The following is a 303-amino-acid chain: Glycine--tRNA ligase alpha subunit (303 aa).

The protein belongs to the class-II aminoacyl-tRNA synthetase family. As to quaternary structure, tetramer of two alpha and two beta subunits.

The protein localises to the cytoplasm. The catalysed reaction is tRNA(Gly) + glycine + ATP = glycyl-tRNA(Gly) + AMP + diphosphate. The chain is Glycine--tRNA ligase alpha subunit from Erwinia tasmaniensis (strain DSM 17950 / CFBP 7177 / CIP 109463 / NCPPB 4357 / Et1/99).